A 988-amino-acid polypeptide reads, in one-letter code: Voltage-gated delayed rectifier potassium channel KCNH5 (988 aa).

The Cytoplasmic segment spans residues 1-217 (MPGGKRGLVA…LHYCAFKTTW (217 aa)). Residues 14–86 (TFLENIVRRS…TIEKVRQTFD (73 aa)) enclose the PAS domain. Residues 91–143 (NCFEVLLYKKNRTPVWFYMQIAPIRNEHEKVVLFLCTFKDITLFKQPIEDDST) enclose the PAC domain. The chain crosses the membrane as a helical span at residues 218–238 (DWVILILTFYTAIMVPYNVSF). Residues 239 to 243 (KTKQN) lie on the Extracellular side of the membrane. Residues 244-264 (NIAWLVLDSVVDVIFLVDIVL) traverse the membrane as a helical segment. The Cytoplasmic portion of the chain corresponds to 265–291 (NFHTTFVGPGGEVISDPKLIRMNYLKT). Residues 292-312 (WFVIDLLSCLPYDIINAFENV) form a helical membrane-spanning segment. The Extracellular portion of the chain corresponds to 313–319 (DEGISSL). A helical; Voltage-sensor transmembrane segment spans residues 320–340 (FSSLKVVRLLRLGRVARKLDH). The Cytoplasmic portion of the chain corresponds to 341–346 (YLEYGA). The chain crosses the membrane as a helical span at residues 347–367 (AVLVLLVCVFGLVAHWLACIW). Topologically, residues 368-419 (YSIGDYEVIDEVTNTIQIDSWLYQLALSIGTPYRYNTSAGIWEGGPSKDSLY) are extracellular. N-linked (GlcNAc...) asparagine glycosylation is present at Asn-403. The pore-forming intramembrane region spans 420–440 (VSSLYFTMTSLTTIGFGNIAP). Residues 432-437 (TIGFGN) carry the Selectivity filter motif. The Extracellular portion of the chain corresponds to 441-446 (TTDVEK). A helical membrane pass occupies residues 447–467 (MFSVAMMMVGSLLYATIFGNV). The Cytoplasmic portion of the chain corresponds to 468-988 (TTIFQQMYAN…PESDKDEINF (521 aa)). 550 to 667 (AFRLASDGCL…NSFSRNLTLT (118 aa)) serves as a coordination point for a nucleoside 3',5'-cyclic phosphate. The interval 704-715 (HPVRKLFQKFKQ) is calmodulin-binding. The disordered stretch occupies residues 718 to 742 (ELRNQGSAQSDPERSQLQVESRPLQ). Over residues 721-742 (NQGSAQSDPERSQLQVESRPLQ) the composition is skewed to polar residues. Residue Lys-785 forms a Glycyl lysine isopeptide (Lys-Gly) (interchain with G-Cter in ubiquitin) linkage. Disordered stretches follow at residues 839–897 (LLSE…AKHP) and 946–965 (SVPQ…PPQI). Over residues 871–885 (SDLRLDKAGEARSPL) the composition is skewed to basic and acidic residues. Residue Ser-883 is modified to Phosphoserine. The interval 909–948 (TLQEVKHELKEDIQLLSCRMTALEKQVAEILKLLSEKSVP) is CAD (involved in subunit assembly).

This sequence belongs to the potassium channel family. H (Eag) (TC 1.A.1.20) subfamily. Kv10.2/KCNH5 sub-subfamily. In terms of assembly, homotetramer. The potassium channel is probably composed of a homo- or heterotetrameric complex of pore-forming alpha subunits that can associate with modulating beta subunits. Heteromultimer with KCNH1/EAG. Detected in adult testis and in embryonic and adult brain, but not in other tissues. Highly expressed in specific brain areas, such as neocortex, olfactory bulb, primary olfactory cortex and brain stem. In cortex, expression is concentrated in a narrow band toward the middle lamella (layer IV). Moderately expressed in spinal cord, dorsal thalamic nuclei, medial hypothalamus, colliculus, lateral lemniscus, pontine nuclei and Islands of Calleja.

It is found in the membrane. The enzyme catalyses K(+)(in) = K(+)(out). Its activity is regulated as follows. Inhibited by low nanomolar concentrations of cytosolic calcium. Functionally, pore-forming (alpha) subunit of a voltage-gated delayed rectifier potassium channel that mediates outward-rectifying potassium currents which, on depolarization, reaches a steady-state level and do not inactivate. The kinetic is characterized by a slow activation time course and a small voltage dependence of the activation time constants, therefore, starts to open at more negative voltages. The activation kinetics depend on the prepulse potential and external divalent cation concentration. The time course of activation is biphasic with a fast and a slowly activating current component. With negative prepulses, the current activation is delayed and slowed down several fold, whereas more positive prepulses speed up activation, therefore the activation rate depends on holding potential. This Rattus norvegicus (Rat) protein is Voltage-gated delayed rectifier potassium channel KCNH5.